The following is a 305-amino-acid chain: Sulfate adenylyltransferase subunit 2 1 (305 aa).

Positions 283–305 (RSGRAIDHDQAGSMERKKREGYF) are disordered.

It belongs to the PAPS reductase family. CysD subfamily. In terms of assembly, heterodimer composed of CysD, the smaller subunit, and CysN.

It catalyses the reaction sulfate + ATP + H(+) = adenosine 5'-phosphosulfate + diphosphate. The protein operates within sulfur metabolism; hydrogen sulfide biosynthesis; sulfite from sulfate: step 1/3. In terms of biological role, with CysN forms the ATP sulfurylase (ATPS) that catalyzes the adenylation of sulfate producing adenosine 5'-phosphosulfate (APS) and diphosphate, the first enzymatic step in sulfur assimilation pathway. APS synthesis involves the formation of a high-energy phosphoric-sulfuric acid anhydride bond driven by GTP hydrolysis by CysN coupled to ATP hydrolysis by CysD. This Chromohalobacter salexigens (strain ATCC BAA-138 / DSM 3043 / CIP 106854 / NCIMB 13768 / 1H11) protein is Sulfate adenylyltransferase subunit 2 1.